A 48-amino-acid polypeptide reads, in one-letter code: M-oxotoxin-Ot1b (48 aa).

It is found in the secreted. Its subcellular location is the target cell membrane. In terms of biological role, disrupts cell membranes, particularly those rich in phosphocholine, through formation of pores. Has antimicrobial activity, hemolytic activity and insecticidal activity. This chain is M-oxotoxin-Ot1b, found in Oxyopes takobius (Lynx spider).